We begin with the raw amino-acid sequence, 433 residues long: Trigger factor (433 aa).

The PPIase FKBP-type domain maps to 161-246; the sequence is DSRVTIDFIG…LHKVEAQELP (86 aa).

Belongs to the FKBP-type PPIase family. Tig subfamily.

It is found in the cytoplasm. It carries out the reaction [protein]-peptidylproline (omega=180) = [protein]-peptidylproline (omega=0). Functionally, involved in protein export. Acts as a chaperone by maintaining the newly synthesized protein in an open conformation. Functions as a peptidyl-prolyl cis-trans isomerase. The sequence is that of Trigger factor from Photobacterium profundum (strain SS9).